The primary structure comprises 556 residues: Carotenoid-cleaving dioxygenase, mitochondrial (556 aa).

His-203, His-263, His-334, and His-550 together coordinate Fe cation.

The protein belongs to the carotenoid oxygenase family. Requires Fe(2+) as cofactor.

Its subcellular location is the mitochondrion. It catalyses the reaction all-trans-beta-carotene + O2 = beta-ionone + all-trans-10'-apo-beta-carotenal. The enzyme catalyses 5-cis-lycopene + O2 = 5-cis-10'-apo-lycopenal + (3E,5E)-6,10-dimethylundeca-3,5,9-trien-2-one. The catalysed reaction is 13-cis-lycopene + O2 = 13-cis-10'-apo-lycopenal + (3E,5E)-6,10-dimethylundeca-3,5,9-trien-2-one. It carries out the reaction lutein + O2 = (3R,6R)-hydroxy-alpha-ionone + (3R)-3-hydroxy-10'-apo-beta-carotenal. It catalyses the reaction lutein + O2 = (3R,6R)-3-hydroxy-10'-apo-alpha-carotenal + (3R)-hydroxy-beta-ionone. The enzyme catalyses all-trans-zeaxanthin + 2 O2 = 4,9-dimethyldodeca-2,4,6,8,10-pentaenedial + 2 (3R)-hydroxy-beta-ionone. The catalysed reaction is all-trans-zeaxanthin + O2 = (3R)-3-hydroxy-10'-apo-beta-carotenal + (3R)-hydroxy-beta-ionone. It carries out the reaction beta-cryptoxanthin + O2 = all-trans-10'-apo-beta-carotenal + (3R)-hydroxy-beta-ionone. It catalyses the reaction all-trans-10'-apo-beta-carotenal + O2 = beta-ionone + 4,9-dimethyldodeca-2,4,6,8,10-pentaenedial. The enzyme catalyses (3R)-3-hydroxy-10'-apo-beta-carotenal + O2 = 4,9-dimethyldodeca-2,4,6,8,10-pentaenedial + (3R)-hydroxy-beta-ionone. The catalysed reaction is (3R,6R)-3-hydroxy-10'-apo-alpha-carotenal + O2 = (3R,6R)-hydroxy-alpha-ionone + 4,9-dimethyldodeca-2,4,6,8,10-pentaenedial. In terms of biological role, broad specificity mitochondrial dioxygenase that mediates the asymmetric oxidative cleavage of carotenoids. Cleaves carotenes (pure hydrocarbon carotenoids) such as all-trans-beta-carotene and lycopene as well as xanthophylls (oxygenated carotenoids) such as zeaxanthin, lutein and beta-cryptoxanthin at both the 9,10 and the 9',10' carbon-carbon double bond. Through its function in carotenoids metabolism regulates oxidative stress and the production of important signaling molecules. This chain is Carotenoid-cleaving dioxygenase, mitochondrial, found in Macaca fascicularis (Crab-eating macaque).